The following is a 169-amino-acid chain: MILLGILASTTIIGLTSSAPLSSYERRDVSDNRPKIFLLMDERIPELENEILGNELGSDVTRTKRIGSLSIVNNLDVLRNRVMLELARRKQERDQRQIEENRRFLENIGKRSVPVSDAGKIVRSDKSRNDRNQPLQFNRIEWIEEEDPLFRGSQDDQMTRVQANELRLL.

The first 18 residues, 1-18 (MILLGILASTTIIGLTSS), serve as a signal peptide directing secretion. The propeptide occupies 19 to 96 (APLSSYERRD…ARRKQERDQR (78 aa)). Residues 83–108 (MLELARRKQERDQRQIEENRRFLENI) adopt a coiled-coil conformation. Gln-97 bears the Pyrrolidone carboxylic acid mark. At Ile-108 the chain carries Isoleucine amide. Positions 109 to 169 (GKRSVPVSDA…RVQANELRLL (61 aa)) are excised as a propeptide.

In terms of processing, residues Ile-66 to Gly-109 may constitute another form of the DH44 peptide, which has not been detected yet. Expressed in brain, ventral ganglia and the retrocerebral complex (at protein level).

The protein localises to the secreted. Regulation of fluid secretion. This chain is Diuretic hormone 44, found in Camponotus floridanus (Florida carpenter ant).